The primary structure comprises 459 residues: Vitronectin (459 aa).

The first 19 residues, 1-19 (MAPLRPLLMLALLAWVALA), serve as a signal peptide directing secretion. In terms of domain architecture, SMB spans 20–63 (DQESCKGRCTDGFIAERKCQCDELCSYYQSCCTDYVAECKPQVT). Disulfide bonds link Cys24/Cys28, Cys24/Cys40, Cys28/Cys58, Cys38/Cys40, Cys38/Cys51, Cys44/Cys50, and Cys51/Cys58. Residues 64 to 66 (RGD) carry the Cell attachment site motif. Residues Tyr75, Tyr78, and Tyr80 each carry the sulfotyrosine modification. Asn87 and Asn146 each carry an N-linked (GlcNAc...) asparagine glycan. 3 Hemopexin repeats span residues 135 to 179 (GKPF…VWGI), 180 to 227 (KGPI…FKGI), and 228 to 285 (PDDV…FALM). Ser289 and Ser378 each carry phosphoserine. Positions 338–380 (LKPSQPKMTKSARRSGKRYRSRRGRGRGRGHSRSQKSHRQSRS) are disordered. Basic residues predominate over residues 347-378 (KSARRSGKRYRSRRGRGRGRGHSRSQKSHRQS). 2 positions are modified to sulfotyrosine: Tyr398 and Tyr401. Residues 400 to 453 (DYKMDWLVPATCEPIQSVYFFSGEEYYRVNLRTQRVDTVTPPYPRSIAQYWLGC) form a Hemopexin 4 repeat.

In terms of assembly, monomer. Interacts with SERPINE1/PAI1 and C1QBP. Sulfated on tyrosine residues. In terms of processing, N- and O-glycosylated. Post-translationally, it has been suggested that the active SMB domain may be permitted considerable disulfide bond heterogeneity or variability, thus two alternate disulfide patterns based on 3D structures are described with 1 disulfide bond conserved in both. As to expression, plasma.

The protein resides in the secreted. It localises to the extracellular space. Functionally, vitronectin is a cell adhesion and spreading factor found in serum and tissues. Vitronectin interact with glycosaminoglycans and proteoglycans. Is recognized by certain members of the integrin family and serves as a cell-to-substrate adhesion molecule. Inhibitor of the membrane-damaging effect of the terminal cytolytic complement pathway. The chain is Vitronectin (VTN) from Sus scrofa (Pig).